The primary structure comprises 393 residues: Lipid-A-disaccharide synthase (393 aa).

This sequence belongs to the LpxB family.

It carries out the reaction a lipid X + a UDP-2-N,3-O-bis[(3R)-3-hydroxyacyl]-alpha-D-glucosamine = a lipid A disaccharide + UDP + H(+). The protein operates within bacterial outer membrane biogenesis; LPS lipid A biosynthesis. Condensation of UDP-2,3-diacylglucosamine and 2,3-diacylglucosamine-1-phosphate to form lipid A disaccharide, a precursor of lipid A, a phosphorylated glycolipid that anchors the lipopolysaccharide to the outer membrane of the cell. The polypeptide is Lipid-A-disaccharide synthase (Actinobacillus pleuropneumoniae serotype 3 (strain JL03)).